The sequence spans 641 residues: MKIINIGILAHVDAGKTTLTESLLYSSGAIKELGSVDSGTTKTDTMFLERQRGITIQTAITSFQRENVKVNIVDTPGHMDFLADVYRSLSVLDGAILLISAKDGVQSQTRILFHALRKMNIPIIFFINKIDQNGINLPDVYQDIKDKLSDDIIIKQTVNLNLKPYVIDYTEPEQWETVIVGNDYLLEKYTIGKTLNIAELEKEENERIQSCSLYPVYHGSAKNNIGIKQLIEVITSKLFSPTQLNSDKLCGNVFKVEYSDDGQRLVYVRLYSGTLHLRDSVNISEKEKIKVTEMYTSINGELRQIDKAEPGEIIILKNELLKLNNVLGDKKRLPHREILENPLPMLQTTIEPCKSVQREKLLDALFEISDSDPLLQYYVDTVTHEIVLSFLGEVQMEVTCTLIQEKYHIEIETRKPTVIYMERPLKKSEFTIDIEVPPNPFWASIGLSVTPLPLGSGIQYESLVSLGYLNQSFQNAVMEGIRYGCEQGLYGWKLTDCKICFKYGLYYSPVSTPADFRMLAPIVLEQAFRKSGTELLEPYLSFEIYVPQEYLSRAYNDASKYCANILNTKLKGNEVILIGEIPARCIQEYRNSLTFFTNGRSVCLTELKGYQVTNIKSAFQPRRPNNRIDKVRHMFNKINLH.

Residues 1 to 242 (MKIINIGILA…VITSKLFSPT (242 aa)) enclose the tr-type G domain. GTP-binding positions include 10-17 (AHVDAGKT), 74-78 (DTPGH), and 128-131 (NKID).

Belongs to the TRAFAC class translation factor GTPase superfamily. Classic translation factor GTPase family. TetM/TetO subfamily.

In terms of biological role, abolishes the inhibitory effect of tetracyclin on protein synthesis by a non-covalent modification of the ribosomes. This is Tetracycline resistance protein TetS (tetS) from Listeria monocytogenes.